The following is a 271-amino-acid chain: Zinc finger CCHC domain-containing protein 9 (271 aa).

The disordered stretch occupies residues 1-67; the sequence is MTRWARVTTS…RKKNKKKKEY (67 aa). Over residues 7-20 the composition is skewed to polar residues; sequence VTTSNSKRPLSATS. Positions 22–33 are enriched in basic and acidic residues; the sequence is EDMKKGSVERAD. Positions 35–46 are enriched in polar residues; it reads SLPNRKQCQSSR. Residues 56 to 65 are compositionally biased toward basic residues; the sequence is AKRKKNKKKK. CCHC-type zinc fingers lie at residues 128–145, 155–172, 184–201, and 211–228; these read MVCF…DCPA, GICY…KCRA, AKCF…SCPD, and GSCK…DCRE.

In terms of tissue distribution, detected in brain cortex and in testis.

It localises to the nucleus. It is found in the nucleolus. In terms of biological role, may down-regulate transcription mediated by NF-kappa-B and the serum response element. This chain is Zinc finger CCHC domain-containing protein 9 (Zcchc9), found in Mus musculus (Mouse).